We begin with the raw amino-acid sequence, 313 residues long: Porphobilinogen deaminase (313 aa).

At C242 the chain carries S-(dipyrrolylmethanemethyl)cysteine.

The protein belongs to the HMBS family. In terms of assembly, monomer. The cofactor is dipyrromethane.

It carries out the reaction 4 porphobilinogen + H2O = hydroxymethylbilane + 4 NH4(+). It participates in porphyrin-containing compound metabolism; protoporphyrin-IX biosynthesis; coproporphyrinogen-III from 5-aminolevulinate: step 2/4. Tetrapolymerization of the monopyrrole PBG into the hydroxymethylbilane pre-uroporphyrinogen in several discrete steps. This Photorhabdus laumondii subsp. laumondii (strain DSM 15139 / CIP 105565 / TT01) (Photorhabdus luminescens subsp. laumondii) protein is Porphobilinogen deaminase.